Consider the following 289-residue polypeptide: Acetyl-coenzyme A carboxylase carboxyl transferase subunit beta (289 aa).

Positions 30-289 (IWRECPRCHS…SNAWRANHDK (260 aa)) constitute a CoA carboxyltransferase N-terminal domain. 4 residues coordinate Zn(2+): Cys34, Cys37, Cys52, and Cys55. A C4-type zinc finger spans residues 34 to 55 (CPRCHSRFYYRRFGNFDVCPEC).

The protein belongs to the AccD/PCCB family. In terms of assembly, acetyl-CoA carboxylase is a heterohexamer composed of biotin carboxyl carrier protein (AccB), biotin carboxylase (AccC) and two subunits each of ACCase subunit alpha (AccA) and ACCase subunit beta (AccD). The cofactor is Zn(2+).

The protein localises to the cytoplasm. It catalyses the reaction N(6)-carboxybiotinyl-L-lysyl-[protein] + acetyl-CoA = N(6)-biotinyl-L-lysyl-[protein] + malonyl-CoA. Its pathway is lipid metabolism; malonyl-CoA biosynthesis; malonyl-CoA from acetyl-CoA: step 1/1. Functionally, component of the acetyl coenzyme A carboxylase (ACC) complex. Biotin carboxylase (BC) catalyzes the carboxylation of biotin on its carrier protein (BCCP) and then the CO(2) group is transferred by the transcarboxylase to acetyl-CoA to form malonyl-CoA. The protein is Acetyl-coenzyme A carboxylase carboxyl transferase subunit beta of Oenococcus oeni (strain ATCC BAA-331 / PSU-1).